A 430-amino-acid chain; its full sequence is Probable folylpolyglutamate synthase (430 aa).

ATP is bound at residue 37 to 40; the sequence is GKET. Glu-132 contributes to the Mg(2+) binding site. Asp-300 is an ATP binding site.

Belongs to the folylpolyglutamate synthase family.

It is found in the mitochondrion. It carries out the reaction (6S)-5,6,7,8-tetrahydrofolyl-(gamma-L-Glu)(n) + L-glutamate + ATP = (6S)-5,6,7,8-tetrahydrofolyl-(gamma-L-Glu)(n+1) + ADP + phosphate + H(+). Its pathway is cofactor biosynthesis; tetrahydrofolylpolyglutamate biosynthesis. In terms of biological role, conversion of folates to polyglutamate derivatives. The protein is Probable folylpolyglutamate synthase (RMA1) of Saccharomyces cerevisiae (strain ATCC 204508 / S288c) (Baker's yeast).